The following is a 136-amino-acid chain: Histone H3.2 (136 aa).

The disordered stretch occupies residues 1 to 43 (MARTKQTARKSTGGKAPRKQLATKAARKSAPATGGVKKPHRFR). Residues K5 and K10 each carry the N6,N6,N6-trimethyllysine; alternate modification. K5 and K10 each carry N6,N6-dimethyllysine; alternate. An N6-methyllysine; alternate mark is found at K5 and K10. Residue K10 is modified to N6-acetyllysine; alternate. S11 carries the phosphoserine modification. A Phosphothreonine modification is found at T12. N6-acetyllysine is present on K15. N6-methyllysine; alternate occurs at positions 19, 24, and 28. 2 positions are modified to N6-acetyllysine; alternate: K19 and K24. K28 is subject to N6,N6,N6-trimethyllysine; alternate. K28 is subject to N6,N6-dimethyllysine; alternate. S29 carries the post-translational modification Phosphoserine. K37 is subject to N6,N6,N6-trimethyllysine; alternate. K37 is subject to N6,N6-dimethyllysine; alternate. K37 is subject to N6-methyllysine; alternate.

This sequence belongs to the histone H3 family. As to quaternary structure, the nucleosome is a histone octamer containing two molecules each of H2A, H2B, H3 and H4 assembled in one H3-H4 heterotetramer and two H2A-H2B heterodimers. The octamer wraps approximately 147 bp of DNA. Acetylation is generally linked to gene activation. Can be acetylated to form H3K9ac, H3K14ac, H3K18ac and H3K23ac. H3K9ac could compete with H3K9me and prevent gene silencing. H3K9ac is restricted to euchromatin. Post-translationally, methylated to form mainly H3K4me, H3K9me, H3K18me, H3K23me, H3K27me and H3K36me. H3K4me1/2/3, H3K9me3, H3K27me3 and H3K36me1/2/3 are typical marks for euchromatin, whereas heterochromatic chromocenters are enriched in H3K9me1/2 and H3K27me1/2. H2BK143ub1 is probably prerequisite for H3K4me. In terms of processing, can be phosphorylated to form H3S10ph, H3T11ph and H3S28ph.

The protein localises to the nucleus. The protein resides in the chromosome. In terms of biological role, core component of nucleosome. Nucleosomes wrap and compact DNA into chromatin, limiting DNA accessibility to the cellular machineries which require DNA as a template. Histones thereby play a central role in transcription regulation, DNA repair, DNA replication and chromosomal stability. DNA accessibility is regulated via a complex set of post-translational modifications of histones, also called histone code, and nucleosome remodeling. The polypeptide is Histone H3.2 (Brassica napus (Rape)).